Consider the following 213-residue polypeptide: Protein-L-isoaspartate O-methyltransferase (213 aa).

S64 is a catalytic residue.

The protein belongs to the methyltransferase superfamily. L-isoaspartyl/D-aspartyl protein methyltransferase family.

Its subcellular location is the cytoplasm. It catalyses the reaction [protein]-L-isoaspartate + S-adenosyl-L-methionine = [protein]-L-isoaspartate alpha-methyl ester + S-adenosyl-L-homocysteine. Catalyzes the methyl esterification of L-isoaspartyl residues in peptides and proteins that result from spontaneous decomposition of normal L-aspartyl and L-asparaginyl residues. It plays a role in the repair and/or degradation of damaged proteins. The protein is Protein-L-isoaspartate O-methyltransferase of Christiangramia forsetii (strain DSM 17595 / CGMCC 1.15422 / KT0803) (Gramella forsetii).